Here is a 244-residue protein sequence, read N- to C-terminus: Geranylgeranylglyceryl phosphate synthase (244 aa).

The Mg(2+) site is built by aspartate 21 and threonine 50. Sn-glycerol 1-phosphate is bound by residues tyrosine 168–glycine 174, glycine 200–glycine 201, and glycine 222–asparagine 223.

Belongs to the GGGP/HepGP synthase family. Group II subfamily. Requires Mg(2+) as cofactor.

It localises to the cytoplasm. It carries out the reaction sn-glycerol 1-phosphate + (2E,6E,10E)-geranylgeranyl diphosphate = sn-3-O-(geranylgeranyl)glycerol 1-phosphate + diphosphate. The protein operates within membrane lipid metabolism; glycerophospholipid metabolism. In terms of biological role, prenyltransferase that catalyzes the transfer of the geranylgeranyl moiety of geranylgeranyl diphosphate (GGPP) to the C3 hydroxyl of sn-glycerol-1-phosphate (G1P). This reaction is the first ether-bond-formation step in the biosynthesis of archaeal membrane lipids. The chain is Geranylgeranylglyceryl phosphate synthase from Sulfurisphaera tokodaii (strain DSM 16993 / JCM 10545 / NBRC 100140 / 7) (Sulfolobus tokodaii).